Here is a 675-residue protein sequence, read N- to C-terminus: DNA ligase 1 (675 aa).

NAD(+) is bound by residues 34-38 (DFEYD), 83-84 (SL), and Glu114. Lys116 (N6-AMP-lysine intermediate) is an active-site residue. Residues Arg137, Glu177, Lys295, and Lys319 each coordinate NAD(+). Residues Cys413, Cys416, Cys431, and Cys436 each contribute to the Zn(2+) site. The 80-residue stretch at 596 to 675 (NSGSALAGKT…AEFLRLLSGG (80 aa)) folds into the BRCT domain.

It belongs to the NAD-dependent DNA ligase family. LigA subfamily. The cofactor is Mg(2+). It depends on Mn(2+) as a cofactor.

It carries out the reaction NAD(+) + (deoxyribonucleotide)n-3'-hydroxyl + 5'-phospho-(deoxyribonucleotide)m = (deoxyribonucleotide)n+m + AMP + beta-nicotinamide D-nucleotide.. DNA ligase that catalyzes the formation of phosphodiester linkages between 5'-phosphoryl and 3'-hydroxyl groups in double-stranded DNA using NAD as a coenzyme and as the energy source for the reaction. It is essential for DNA replication and repair of damaged DNA. The polypeptide is DNA ligase 1 (Opitutus terrae (strain DSM 11246 / JCM 15787 / PB90-1)).